The chain runs to 432 residues: uncharacterized protein (432 aa).

Disordered regions lie at residues 37-61 (DGIG…SADC), 127-151 (RDHD…DTRY), and 298-378 (SVSS…NHQC). Residues 312 to 335 (DSSTLANTQGFREDQSQQQHTPSP) show a composition bias toward polar residues. Residues 341–366 (SSLSHQFHQSIHQSHQHHQSIYQSQH) are compositionally biased toward low complexity.

This is an uncharacterized protein from Arabidopsis thaliana (Mouse-ear cress).